The primary structure comprises 324 residues: NADH-cytochrome b5 reductase 2 (324 aa).

The chain crosses the membrane as a helical span at residues 31–47; that stretch reads IPLIGGITLAAGAGYYY. The FAD-binding FR-type domain maps to 70–178; that stretch reads QGWIGLKLAH…KGPLPKYPWE (109 aa). 181 to 216 serves as a coordination point for FAD; the sequence is KHDHICLIAGGTGITPMYQLVRKIFSNPEDKTKVTL.

The protein belongs to the flavoprotein pyridine nucleotide cytochrome reductase family. It depends on FAD as a cofactor.

It localises to the mitochondrion outer membrane. It carries out the reaction 2 Fe(III)-[cytochrome b5] + NADH = 2 Fe(II)-[cytochrome b5] + NAD(+) + H(+). Its function is as follows. May mediate the reduction of outer membrane cytochrome b5. The chain is NADH-cytochrome b5 reductase 2 (MCR1) from Ajellomyces capsulatus (strain NAm1 / WU24) (Darling's disease fungus).